Consider the following 765-residue polypeptide: Beta-glucosidase cel3A (765 aa).

An N-terminal signal peptide occupies residues 1–24 (MRWSSPTSSSLSLVALLLVAHVDA). 10 N-linked (GlcNAc...) asparagine glycosylation sites follow: asparagine 66, asparagine 124, asparagine 250, asparagine 304, asparagine 311, asparagine 349, asparagine 549, asparagine 588, asparagine 657, and asparagine 681.

This sequence belongs to the glycosyl hydrolase 3 family.

Its subcellular location is the secreted. It catalyses the reaction Hydrolysis of terminal, non-reducing beta-D-glucosyl residues with release of beta-D-glucose.. Its pathway is glycan metabolism; cellulose degradation. In terms of biological role, beta-glucosidases are one of a number of cellulolytic enzymes involved in the degradation of cellulosic biomass. Catalyzes the last step releasing glucose from the inhibitory cellobiose. Shows higher activities on cellobiose and cellotriose but lower activities on laminarioligosaccharides and polymers. This is Beta-glucosidase cel3A from Pyricularia oryzae (strain 70-15 / ATCC MYA-4617 / FGSC 8958) (Rice blast fungus).